The sequence spans 130 residues: Lysozyme C (130 aa).

The C-type lysozyme domain maps to 1–130 (KVWERCALAR…VEQYVEGCDL (130 aa)). 4 disulfides stabilise this stretch: cysteine 6–cysteine 128, cysteine 30–cysteine 116, cysteine 65–cysteine 81, and cysteine 77–cysteine 95. Active-site residues include glutamate 35 and aspartate 53.

The protein belongs to the glycosyl hydrolase 22 family. As to quaternary structure, monomer.

The catalysed reaction is Hydrolysis of (1-&gt;4)-beta-linkages between N-acetylmuramic acid and N-acetyl-D-glucosamine residues in a peptidoglycan and between N-acetyl-D-glucosamine residues in chitodextrins.. Functionally, lysozymes have primarily a bacteriolytic function; those in tissues and body fluids are associated with the monocyte-macrophage system and enhance the activity of immunoagents. This Camelus dromedarius (Dromedary) protein is Lysozyme C (LYZ).